Reading from the N-terminus, the 355-residue chain is 3-isopropylmalate dehydrogenase (355 aa).

Substrate-binding residues include arginine 90, arginine 100, arginine 128, and aspartate 222. Mg(2+)-binding residues include aspartate 222, aspartate 246, and aspartate 250. Glycine 280–asparagine 292 contacts NAD(+).

It belongs to the isocitrate and isopropylmalate dehydrogenases family. LeuB type 1 subfamily. In terms of assembly, homodimer. The cofactor is Mg(2+). Mn(2+) is required as a cofactor.

Its subcellular location is the cytoplasm. The enzyme catalyses (2R,3S)-3-isopropylmalate + NAD(+) = 4-methyl-2-oxopentanoate + CO2 + NADH. Its pathway is amino-acid biosynthesis; L-leucine biosynthesis; L-leucine from 3-methyl-2-oxobutanoate: step 3/4. Functionally, catalyzes the oxidation of 3-carboxy-2-hydroxy-4-methylpentanoate (3-isopropylmalate) to 3-carboxy-4-methyl-2-oxopentanoate. The product decarboxylates to 4-methyl-2 oxopentanoate. The protein is 3-isopropylmalate dehydrogenase of Burkholderia thailandensis (strain ATCC 700388 / DSM 13276 / CCUG 48851 / CIP 106301 / E264).